We begin with the raw amino-acid sequence, 302 residues long: 1D-myo-inositol 2-acetamido-2-deoxy-alpha-D-glucopyranoside deacetylase (302 aa).

Residues H12, D15, and H147 each coordinate Zn(2+).

This sequence belongs to the MshB deacetylase family. Zn(2+) is required as a cofactor.

The enzyme catalyses 1D-myo-inositol 2-acetamido-2-deoxy-alpha-D-glucopyranoside + H2O = 1D-myo-inositol 2-amino-2-deoxy-alpha-D-glucopyranoside + acetate. Its function is as follows. Catalyzes the deacetylation of 1D-myo-inositol 2-acetamido-2-deoxy-alpha-D-glucopyranoside (GlcNAc-Ins) in the mycothiol biosynthesis pathway. The polypeptide is 1D-myo-inositol 2-acetamido-2-deoxy-alpha-D-glucopyranoside deacetylase (Thermobispora bispora (strain ATCC 19993 / DSM 43833 / CBS 139.67 / JCM 10125 / KCTC 9307 / NBRC 14880 / R51)).